The sequence spans 290 residues: Pantothenate synthetase (290 aa).

Residue 30–37 (MGALHEGH) participates in ATP binding. His37 (proton donor) is an active-site residue. (R)-pantoate is bound at residue Gln61. A beta-alanine-binding site is contributed by Gln61. 147 to 150 (GEKD) is an ATP binding site. Residue Gln153 coordinates (R)-pantoate. ATP is bound by residues Val176 and 184–187 (KSSR).

Belongs to the pantothenate synthetase family. Homodimer.

The protein localises to the cytoplasm. It carries out the reaction (R)-pantoate + beta-alanine + ATP = (R)-pantothenate + AMP + diphosphate + H(+). Its pathway is cofactor biosynthesis; (R)-pantothenate biosynthesis; (R)-pantothenate from (R)-pantoate and beta-alanine: step 1/1. Its function is as follows. Catalyzes the condensation of pantoate with beta-alanine in an ATP-dependent reaction via a pantoyl-adenylate intermediate. The protein is Pantothenate synthetase of Chlorobium chlorochromatii (strain CaD3).